Here is a 591-residue protein sequence, read N- to C-terminus: MWVLQALAIMLSIQAGTLDLVETPPVVGNLPVAMPVPLNLPVGGLSPPVLKGPVNHQMLPPKRPVPPPKGGKCAPAARYFLSSDKLHDYLMSTLPPQIEDMVKCDEVNLEGMLADVLNTVESSDLLSLLDGISLLKGGEGGGLGIGGLLGNEGNGDSSKPSSGSKATGGLGQLIPGGIPGTEALGGLLNLGGDKSSGKGLLNGDGLSKIKKPLEDAVENVSGIKDAIQEKVNEVVPDGVKEPLNDVLKMDIKDTLLELKVGQVTLDDMEINMEANGMQVLSMLTATIDGKGVLGPVISLLQFEAKMDVMTTIAVASNNTQCVNLDAQDTHMHVKEMKIQLVETVTGKVPLPVPLPLDQIIPAIVTAKINENLEKSNSCAIVLNDFNNCKNNTGLFSYQVNTARISPKGLVILYCAKANIGNKTVPVPGGRLPPDPKNASIAVTISSTTLKTLVKEVAKNSSVQMDGLEAQITHIAFASQENNTLRVVYKVDITKNGEHFATGETKLFISHGSKISNSTLIPDVKLIRSEHSVVPPEAKEEVEGILSEVGKVAWSNFNETYKKMNIPVGVSSHTLKNSDVKLMKSIDLQAAS.

Residues 1–18 (MWVLQALAIMLSIQAGTL) form the signal peptide. Residues 151–172 (NEGNGDSSKPSSGSKATGGLGQ) form a disordered region. Asn421 and Asn516 each carry an N-linked (GlcNAc...) asparagine glycan.

N-glycosylated. The N-glycans consist mainly of complex sialylated and fucosylated biantennary structures. As to expression, expressed in lung. Not detected in other tissues tested (at protein level).

Its subcellular location is the secreted. This Mus musculus (Mouse) protein is Vomeromodulin.